A 189-amino-acid chain; its full sequence is Protein sisterless A (189 aa).

Residues 93 to 124 (DCRGSGSGSGSGSGSDVKDAQRQRAESCRKSR) form a disordered region. Basic and acidic residues predominate over residues 108-121 (DVKDAQRQRAESCR).

As to quaternary structure, homodimer. Interacts with dpn (via bHLH motif). Interacts with da (via bHLH motif). Interacts with Bap60. As to expression, localizes to all the embryonic nuclei until nuclear cycle 9, when expression ceases in the prepole cell nuclei. Associates with the somatic nuclei through cycle 10. By nuclear cycle 12, distributes uniformly in the somatic portion of the embryo and no longer associates with the nuclei. After early cycle 14 (beginning of cellularization) there is very little or no expression in the periphery of the embryo or in either the somatic or germ cells. In the yolk, accumulates at the nuclei from nuclear cycle 8 until 10-11 hours after fertilization.

Its subcellular location is the nucleus. Its function is as follows. Involved in sex determination and dosage compensation. Required for proper expression of Sxl in embryonic somatic cells. Also has an essential function in the yolk nuclei. Involved in endoderm migration and midgut formation. In Drosophila melanogaster (Fruit fly), this protein is Protein sisterless A (sisA).